Consider the following 138-residue polypeptide: Membrane protein P8A7 (138 aa).

A run of 4 helical transmembrane segments spans residues 12 to 30, 32 to 56, 71 to 90, and 93 to 118; these read ILVILAGCFITACGIYLFV, GLFHSIIGFVLGIYYLLAGVCIVLL, YTYWFGKGALISLIGLLILG, and GFFLAAGIIVIAVGIVCMIFHFLLGC.

It localises to the membrane. This chain is Membrane protein P8A7 (pmpA), found in Dictyostelium discoideum (Social amoeba).